A 295-amino-acid polypeptide reads, in one-letter code: sn-glycerol-3-phosphate transport system permease protein UgpA (295 aa).

Residues 1–11 lie on the Cytoplasmic side of the membrane; the sequence is MSSSRPVFRSR. Residues 12 to 32 traverse the membrane as a helical segment; that stretch reads WLPYLLVAPQLVITVIFFIWP. Residues 33 to 80 lie on the Periplasmic side of the membrane; that stretch reads AGEALWYSLQSVDPFGFSSQFVGLENFVALFHDSYYLDAFWTTIKFSA. The region spanning 76–284 is the ABC transmembrane type-1 domain; the sequence is IKFSALVTFS…FLVIILTVVQ (209 aa). The helical transmembrane segment at 81 to 101 threads the bilayer; sequence LVTFSGLLVSLFFAALVDYVV. Over 102 to 109 the chain is Cytoplasmic; sequence RGSRFYQT. Residues 110–130 form a helical membrane-spanning segment; sequence LMLLPYAVAPAVAAVLWIFLF. Over 131 to 157 the chain is Periplasmic; the sequence is NPGRGLITHFLGEFGYDWNHAQNSGQA. The chain crosses the membrane as a helical span at residues 158–178; that stretch reads MFLVVFASVWKQISYNFLFFF. The Cytoplasmic portion of the chain corresponds to 179-207; sequence AALQSIPRSLVEAAAIDGAGPIRRFFRLS. Residues 208 to 228 form a helical membrane-spanning segment; it reads LPLIAPVSFFLLVVNLVYAFF. The Periplasmic segment spans residues 229–262; sequence DTFPVIDAATAGGPVQATTTLIYKIYREGFTGLD. The helical transmembrane segment at 263 to 283 threads the bilayer; that stretch reads LSASAAQSVVLMFLVIILTVV. Residues 284 to 295 lie on the Cytoplasmic side of the membrane; sequence QFRYVESKVRYQ.

The protein belongs to the binding-protein-dependent transport system permease family. UgpAE subfamily. In terms of assembly, the complex is composed of two ATP-binding proteins (UgpC), two transmembrane proteins (UgpA and UgpE) and a solute-binding protein (UgpB).

It is found in the cell inner membrane. In terms of biological role, part of the ABC transporter complex UgpBAEC involved in sn-glycerol-3-phosphate (G3P) import. Probably responsible for the translocation of the substrate across the membrane. This chain is sn-glycerol-3-phosphate transport system permease protein UgpA (ugpA), found in Salmonella typhimurium (strain LT2 / SGSC1412 / ATCC 700720).